The chain runs to 284 residues: Homeobox protein six1 (284 aa).

Residues glycine 124 to glutamate 183 constitute a DNA-binding region (homeobox). A disordered region spans residues valine 168 to serine 230. Positions aspartate 179 to threonine 190 are enriched in basic and acidic residues. Over residues glutamate 191–glutamine 202 the composition is skewed to low complexity.

The protein belongs to the SIX/Sine oculis homeobox family.

Its subcellular location is the nucleus. It is found in the cytoplasm. Transcription factor that is involved in the regulation of cell proliferation, apoptosis and embryonic development. Depending on context, functions as a transcriptional repressor or activator. Required for the normal formation of pre-placodal ectoderm. The sequence is that of Homeobox protein six1 (six1) from Xenopus laevis (African clawed frog).